The following is a 70-amino-acid chain: Large ribosomal subunit protein eL38 (70 aa).

It belongs to the eukaryotic ribosomal protein eL38 family.

The polypeptide is Large ribosomal subunit protein eL38 (RpL38) (Spodoptera frugiperda (Fall armyworm)).